The chain runs to 1047 residues: [F-actin]-monooxygenase MICAL1 (1047 aa).

The tract at residues Met1 to Glu489 is monooxygenase domain. FAD-binding positions include Cys95, Glu114–Arg116, Arg121–Asn123, Phe181, Tyr293, and Asp393. Thr475 carries the phosphothreonine modification. The region spanning Ser507–Lys611 is the Calponin-homology (CH) domain. Residue Ser616 is modified to Phosphoserine. The disordered stretch occupies residues Arg644–His672. Positions Val659–Leu668 are enriched in pro residues. Positions Asp679–Lys741 constitute an LIM zinc-binding domain. Residues Cys681, Cys684, His702, Cys705, Cys708, Cys711, Cys731, and His734 each coordinate Zn(2+). Disordered regions lie at residues Asp739 to Arg787 and Glu849 to Leu872. Over residues Asn745–Ser767 the composition is skewed to polar residues. Ser777 and Ser781 each carry phosphoserine. The segment covering Gly851–Leu868 has biased composition (acidic residues). The 143-residue stretch at Lys905–Val1047 folds into the bMERB domain. A coiled-coil region spans residues Phe912–His996.

It belongs to the Mical family. In terms of assembly, interacts with STK38 and STK38L. Associates with the SH3 domain of NEDD9. Interacts with VIM and PLXNA3. Interacts with RAB1B, RAB8A, RAB10, RAB13 and RAB15 (in their GTP-bound forms); binding to RAB1B is of low affinity compared to other Rab proteins; at least in case of RAB8A and RAB10 can bind 2 molecules of the Rab proteins simultaneously. Interacts with GRAF1/ARHGAP26, GRAF2/ARHGAP10, RAB8A, RAB8B and RAB10; may bind simultaneously to GRAFs and Rabs and connects GRAFs to Rabs. Does not interact with RAB1 and RAB11A. It depends on FAD as a cofactor.

It localises to the cytoplasm. The protein resides in the cytoskeleton. The protein localises to the endosome membrane. Its subcellular location is the midbody. The catalysed reaction is L-methionyl-[F-actin] + NADPH + O2 + H(+) = L-methionyl-(R)-S-oxide-[F-actin] + NADP(+) + H2O. It carries out the reaction NADPH + O2 + H(+) = H2O2 + NADP(+). In terms of biological role, monooxygenase that promotes depolymerization of F-actin by mediating oxidation of specific methionine residues on actin to form methionine-sulfoxide, resulting in actin filament disassembly and preventing repolymerization. In the absence of actin, it also functions as a NADPH oxidase producing H(2)O(2). Acts as a cytoskeletal regulator that connects NEDD9 to intermediate filaments. Also acts as a negative regulator of apoptosis via its interaction with STK38 and STK38L; acts by antagonizing STK38 and STK38L activation by MST1/STK4. Involved in regulation of lamina-specific connectivity in the nervous system such as the development of lamina-restricted hippocampal connections. Through redox regulation of the actin cytoskeleton controls the intracellular distribution of secretory vesicles containing L1/neurofascin/NgCAM family proteins in neurons, thereby regulating their cell surface levels. May act as Rab effector protein and play a role in vesicle trafficking. Promotes endosomal tubule extension by associating with RAB8 (RAB8A or RAB8B), RAB10 and GRAF (GRAF1/ARHGAP26 or GRAF2/ARHGAP10) on the endosomal membrane which may connect GRAFs to Rabs, thereby participating in neosynthesized Rab8-Rab10-Rab11-dependent protein export. The protein is [F-actin]-monooxygenase MICAL1 (Mical1) of Rattus norvegicus (Rat).